Reading from the N-terminus, the 172-residue chain is Small ribosomal subunit protein uS5 (172 aa).

Residues 17–80 (LREKMISVNR…EQARRNMFKV (64 aa)) enclose the S5 DRBM domain.

The protein belongs to the universal ribosomal protein uS5 family. As to quaternary structure, part of the 30S ribosomal subunit. Contacts proteins S4 and S8.

With S4 and S12 plays an important role in translational accuracy. Functionally, located at the back of the 30S subunit body where it stabilizes the conformation of the head with respect to the body. The chain is Small ribosomal subunit protein uS5 from Paraburkholderia phytofirmans (strain DSM 17436 / LMG 22146 / PsJN) (Burkholderia phytofirmans).